An 83-amino-acid polypeptide reads, in one-letter code: Colicin-E5 immunity protein (83 aa).

This protein is able to protect a cell, which harbors the plasmid ColE5 encoding colicin E5, against colicin E5. This chain is Colicin-E5 immunity protein (imm), found in Escherichia coli.